A 196-amino-acid chain; its full sequence is MLTIGVLGLQGAVREHIHAIEACGAAGLVVKRPEQLNEVDGLILPGGESTTMRRLIDTYQFMEPLREFAAQGKPMFGTCAGLIILAKEIAGSDNPHLGLLNVVVERNSFGRQVDSFEADLTIKGLDEPFTGVFIRAPHILEAGENVEVLSEHNGRIVAAKQGQFLGCSFHPELTEDHRVTQLFVEMVEEYKQKALV.

47–49 (GES) contacts L-glutamine. The Nucleophile role is filled by cysteine 79. Residues arginine 106 and 134-135 (IR) each bind L-glutamine. Catalysis depends on charge relay system residues histidine 170 and glutamate 172.

The protein belongs to the glutaminase PdxT/SNO family. In terms of assembly, in the presence of PdxS, forms a dodecamer of heterodimers. Only shows activity in the heterodimer.

The catalysed reaction is aldehydo-D-ribose 5-phosphate + D-glyceraldehyde 3-phosphate + L-glutamine = pyridoxal 5'-phosphate + L-glutamate + phosphate + 3 H2O + H(+). It carries out the reaction L-glutamine + H2O = L-glutamate + NH4(+). Its pathway is cofactor biosynthesis; pyridoxal 5'-phosphate biosynthesis. Functionally, catalyzes the hydrolysis of glutamine to glutamate and ammonia as part of the biosynthesis of pyridoxal 5'-phosphate. The resulting ammonia molecule is channeled to the active site of PdxS. The chain is Pyridoxal 5'-phosphate synthase subunit PdxT from Bacillus subtilis (strain 168).